A 411-amino-acid polypeptide reads, in one-letter code: Na(+)/H(+) antiporter NhaA 2 (411 aa).

A run of 10 helical transmembrane segments spans residues 18–38, 59–79, 97–117, 127–147, 167–187, 218–238, 261–281, 297–317, 338–358, and 366–386; these read VGGSILLIAAAIALVWANSPV, LTVGTWAQDGLLAVFFFVAGL, LLPIIAACGGVVVPAIIAATI, GWAIPVATDIAFALGVLALTG, LLAIVLIAVLFTSSIALLWLL, WYCMHDAGIHATLAGVALGLL, PLSAGVCVPVFALFASGVALS, VIAGLLVGKTVGIFGISWLAI, VLGAIGFTVSLLVADLALAGI, and IAKVAVLVTSLTASLIGSALL.

Belongs to the NhaA Na(+)/H(+) (TC 2.A.33) antiporter family.

Its subcellular location is the cell membrane. The catalysed reaction is Na(+)(in) + 2 H(+)(out) = Na(+)(out) + 2 H(+)(in). Its function is as follows. Na(+)/H(+) antiporter that extrudes sodium in exchange for external protons. The chain is Na(+)/H(+) antiporter NhaA 2 from Rhodococcus jostii (strain RHA1).